Consider the following 1827-residue polypeptide: Phenolphthiocerol/phthiocerol polyketide synthase subunit C (1827 aa).

A Ketosynthase family 3 (KS3) domain is found at 35–461 (CEPVAVVGIG…GTNAHVVVEQ (427 aa)). Residues Cys207, His342, and His383 each act as for beta-ketoacyl synthase activity in the active site. The interval 566–876 (VFVYSGQGSQ…LAAVGVAASE (311 aa)) is acyltransferase. Residue Ser654 is the For malonyltransferase activity of the active site. The segment at 910–1037 (HPLLGAHIEM…AKVEQSPREC (128 aa)) is N-terminal hotdog fold. Positions 910–1076 (HPLLGAHIEM…QHHGPAFAAL (167 aa)) are dehydratase. The region spanning 910–1198 (HPLLGAHIEM…LRRVERRAVP (289 aa)) is the PKS/mFAS DH domain. Residue His942 is the Proton acceptor; for dehydratase activity of the active site. Residues 1050–1198 (GTTVSPADFY…LRRVERRAVP (149 aa)) are C-terminal hotdog fold. Asp1111 (proton donor; for dehydratase activity) is an active-site residue. Residues 1439–1617 (ASYVVTGGLG…VINWGPWSEV (179 aa)) form a beta-ketoacyl reductase region. Residue 1440-1485 (SYVVTGGLGGLGLVVARWLVDRGAGRVVLGGRSDPTDEQCNVLAEL) coordinates NADP(+). In terms of domain architecture, Carrier spans 1706–1785 (RAVTERMCAR…DLTADLMRQL (80 aa)). Residue Ser1745 is modified to O-(pantetheine 4'-phosphoryl)serine.

The cofactor is NADP(+). Pantetheine 4'-phosphate is required as a cofactor.

The enzyme catalyses icosanoyl-[(phenol)carboxyphthiodiolenone synthase] + 2 (S)-methylmalonyl-CoA + 3 malonyl-CoA + 5 NADPH + 10 H(+) = C32-carboxyphthiodiolenone-[(phenol)carboxyphthiodiolenone synthase] + 5 CO2 + 5 NADP(+) + 5 CoA + 2 H2O. The catalysed reaction is docosanoyl-[(phenol)carboxyphthiodiolenone synthase] + 2 (S)-methylmalonyl-CoA + 3 malonyl-CoA + 5 NADPH + 10 H(+) = C34-carboxyphthiodiolenone-[(phenol)carboxyphthiodiolenone synthase] + 5 CO2 + 5 NADP(+) + 5 CoA + 2 H2O. It carries out the reaction 17-(4-hydroxyphenyl)heptadecanoyl-[(phenol)carboxyphthiodiolenone synthase] + 2 (S)-methylmalonyl-CoA + 3 malonyl-CoA + 5 NADPH + 10 H(+) = C35-(phenol)carboxyphthiodiolenone-[(phenol)carboxyphthiodiolenone synthase] + 5 CO2 + 5 NADP(+) + 5 CoA + 2 H2O. It catalyses the reaction 19-(4-hydroxyphenyl)nonadecanoyl-[(phenol)carboxyphthiodiolenone synthase] + 2 (S)-methylmalonyl-CoA + 3 malonyl-CoA + 5 NADPH + 10 H(+) = C37-(phenol)carboxyphthiodiolenone-[(phenol)carboxyphthiodiolenone synthase] + 5 CO2 + 5 NADP(+) + 5 CoA + 2 H2O. It functions in the pathway lipid metabolism; fatty acid biosynthesis. In terms of biological role, part of the PpsABCDE complex involved in the biosynthesis of the lipid core common to phthiocerols and phenolphthiocerols by successive additions of malonyl-CoA or methylmalonyl-CoA extender units. PpsA can accept as substrate the activated forms of either icosanoyl (C20), docosanoyl (C22) or lignoceroyl (C24) groups from FadD26, or a (4-hydroxyphenyl)-C17 or (4-hydroxyphenyl)-C19 fatty acyl from FadD29. PpsA initiates the biosynthesis and extends its substrate using a malonyl-CoA extender unit. The PpsB and PpsC proteins add the second and third malonyl-CoA extender units. PpsD adds an (R)-methylmalonyl unit and PpsE adds a second (R)-methylmalonyl unit. The incorporation of the methylmalonyl units results in formation of two branched methyl groups in the elongated product. This is Phenolphthiocerol/phthiocerol polyketide synthase subunit C (ppsD) from Mycobacterium bovis (strain ATCC BAA-935 / AF2122/97).